The chain runs to 1822 residues: Signal-induced proliferation-associated 1-like protein 1 (1822 aa).

Disordered stretches follow at residues 1–30 and 47–125; these read MTSL…PKVH and GSSV…VSLN. Over residues 84–94 the composition is skewed to basic and acidic residues; it reads PPRKENVKESS. Residues 95–125 are compositionally biased toward low complexity; that stretch reads RSSQEIETSSCLESLSSKGSPVSQGSSVSLN. Phosphoserine is present on residues Ser162, Ser187, Ser193, Ser208, Ser255, and Ser288. Residues 277–297 form a disordered region; sequence EREKPLKRRSKSETGDSSIFR. One can recognise a Rap-GAP domain in the interval 638–855; the sequence is FMKLDEQGLN…RTRQEYLKDL (218 aa). Positions 992-1068 constitute a PDZ domain; it reads EMTLRRNGLG…VKVVIIPPHD (77 aa). 7 positions are modified to phosphoserine: Ser1117, Ser1126, Ser1155, Ser1166, Ser1188, Ser1209, and Ser1220. The interval 1134-1165 is disordered; the sequence is AGKGDGKMPLPERAANIPRSISSDGRPLERRL. Residues 1183-1252 form a disordered region; the sequence is SQCRNSPSNL…WQRSEDSLAD (70 aa). The span at 1188–1198 shows a compositional bias: low complexity; it reads SPSNLSSSSET. Residues 1225-1244 are compositionally biased toward polar residues; that stretch reads DRQNTQSDIGGSGKSTPSWQ. Phosphoserine occurs at positions 1273 and 1288. Residues 1286–1324 form a disordered region; the sequence is HLSPNKQGHSDSHYSSHSSSNTLSSNASSAHSDEKWYDG. Residues 1300 to 1315 show a composition bias toward low complexity; that stretch reads SSHSSSNTLSSNASSA. Ser1344 carries the post-translational modification Phosphoserine; by PLK2. At Thr1348 the chain carries Phosphothreonine; by PLK2. A compositionally biased stretch (low complexity) spans 1358 to 1367; it reads TASLGASTSS. Residues 1358–1382 are disordered; it reads TASLGASTSSPRSGPGKEKVAPLWH. Position 1367 is a phosphoserine; by CDK5 (Ser1367). Ser1384 carries the post-translational modification Phosphoserine. The segment covering 1395 to 1407 has biased composition (basic and acidic residues); it reads LETEGHGMDRKTE. A disordered region spans residues 1395-1493; it reads LETEGHGMDR…SSSGPRTFYP (99 aa). Residues Ser1408, Ser1409, Ser1430, Ser1449, and Ser1451 each carry the phosphoserine modification. Residues 1417–1436 show a composition bias toward polar residues; the sequence is KSQGGSSPLTRENSTFSIND. Low complexity-rich tracts occupy residues 1437-1451 and 1471-1486; these read ATSH…HSAS and SSQL…SSSS. Phosphoserine occurs at positions 1546 and 1567. The interval 1567–1595 is disordered; the sequence is SPTPESQKNFKFHGLSSPQSPFPSTPTSR. Thr1569 is subject to Phosphothreonine. Phosphoserine occurs at positions 1572, 1583, 1586, 1603, and 1606. At Arg1619 the chain carries Asymmetric dimethylarginine. Phosphoserine is present on residues Ser1621, Ser1665, Ser1668, Ser1726, Ser1729, Ser1746, Ser1747, and Ser1752. The stretch at 1753 to 1813 forms a coiled coil; it reads PTLASKVDQL…ASDKLKKFTE (61 aa).

As to quaternary structure, interacts (via PDZ domain) with EPHA4 (via PDZ motif); controls neuronal morphology through regulation of the RAP1 (RAP1A or RAP1B) and RAP2 (RAP2A, RAP2B or RAP2C) GTPases. Interacts with DLG4, PDLIM5, PDLIM7 and LZTS3. Interacts with the actin cytoskeleton. In terms of processing, ubiquitinated and degraded by the SCF(BTRC) following phosphorylation by PLK2. Phosphorylated at Ser-1367 by CDK5, creating a docking site for the POLO box domains of PLK2. Subsequently, PLK2 binds and phosphorylates SIPA1L1, leading to ubiquitination and degradation by the proteasome. Detected in brain (at protein level).

It localises to the cytoplasm. The protein localises to the cytoskeleton. It is found in the postsynaptic density. Its subcellular location is the synapse. The protein resides in the synaptosome. Stimulates the GTPase activity of RAP2A. Promotes reorganization of the actin cytoskeleton and recruits DLG4 to F-actin. Contributes to the regulation of dendritic spine morphogenesis. In Rattus norvegicus (Rat), this protein is Signal-induced proliferation-associated 1-like protein 1 (Sipa1l1).